The following is a 301-amino-acid chain: Probable aspartoacylase (301 aa).

Residues histidine 13 and glutamate 16 each coordinate Zn(2+). Residues arginine 54 and 61-62 (NR) contribute to the substrate site. Position 105 (histidine 105) interacts with Zn(2+). Substrate is bound by residues glutamate 163 and tyrosine 273.

The protein belongs to the AspA/AstE family. Aspartoacylase subfamily. The cofactor is Zn(2+).

It carries out the reaction an N-acyl-L-aspartate + H2O = a carboxylate + L-aspartate. This Prochlorococcus marinus (strain MIT 9312) protein is Probable aspartoacylase.